The primary structure comprises 496 residues: ATP synthase subunit beta, chloroplastic (496 aa).

170–177 (GGAGVGKT) provides a ligand contact to ATP.

The protein belongs to the ATPase alpha/beta chains family. In terms of assembly, F-type ATPases have 2 components, CF(1) - the catalytic core - and CF(0) - the membrane proton channel. CF(1) has five subunits: alpha(3), beta(3), gamma(1), delta(1), epsilon(1). CF(0) has four main subunits: a(1), b(1), b'(1) and c(9-12).

It is found in the plastid. It localises to the chloroplast thylakoid membrane. The catalysed reaction is ATP + H2O + 4 H(+)(in) = ADP + phosphate + 5 H(+)(out). Functionally, produces ATP from ADP in the presence of a proton gradient across the membrane. The catalytic sites are hosted primarily by the beta subunits. The protein is ATP synthase subunit beta, chloroplastic of Trachycarpus fortunei (Chinese windmill palm).